Reading from the N-terminus, the 174-residue chain is Inactive signal peptidase IA (174 aa).

Residues 1–7 (MKKVVKY) are Cytoplasmic-facing. Residues 8 to 28 (LISLILAIIIVLFVQTFVIVG) traverse the membrane as a helical segment. The Extracellular portion of the chain corresponds to 29–174 (HVIPNNDMSP…FSKWTIQFKS (146 aa)).

Belongs to the peptidase S26 family.

Its subcellular location is the cell membrane. Catalytically inactive. This Staphylococcus aureus (strain Mu50 / ATCC 700699) protein is Inactive signal peptidase IA (spsA).